A 338-amino-acid polypeptide reads, in one-letter code: S-adenosylmethionine:tRNA ribosyltransferase-isomerase (338 aa).

The protein belongs to the QueA family. In terms of assembly, monomer.

Its subcellular location is the cytoplasm. The catalysed reaction is 7-aminomethyl-7-carbaguanosine(34) in tRNA + S-adenosyl-L-methionine = epoxyqueuosine(34) in tRNA + adenine + L-methionine + 2 H(+). The protein operates within tRNA modification; tRNA-queuosine biosynthesis. In terms of biological role, transfers and isomerizes the ribose moiety from AdoMet to the 7-aminomethyl group of 7-deazaguanine (preQ1-tRNA) to give epoxyqueuosine (oQ-tRNA). The polypeptide is S-adenosylmethionine:tRNA ribosyltransferase-isomerase (Francisella tularensis subsp. novicida (strain U112)).